Consider the following 865-residue polypeptide: Xylosyltransferase 2 (865 aa).

Topologically, residues 1-15 (MVASARVQKLVRRYK) are cytoplasmic. The chain crosses the membrane as a helical; Signal-anchor for type II membrane protein span at residues 16–36 (LAIATALAILLLQGLVVWSFS). Residues 37 to 865 (GLEEDEPGEK…GPVKADGRLR (829 aa)) lie on the Lumenal side of the membrane. The interval 39 to 155 (EEDEPGEKGR…SVEGAPQPTD (117 aa)) is disordered. Positions 53-65 (RPLDPGEGSKDTD) are enriched in basic and acidic residues. Positions 73 to 82 (SAGRRHGRWR) are enriched in basic residues. N-linked (GlcNAc...) asparagine glycosylation is present at N122. 4 cysteine pairs are disulfide-bonded: C162-C190, C206-C448, C467-C480, and C469-C478. Residues V239, D267, and 296-298 (TIW) contribute to the UDP-alpha-D-xylose site. N327 carries N-linked (GlcNAc...) asparagine glycosylation. 400–401 (DW) serves as a coordination point for UDP-alpha-D-xylose. Residues S481 and 504 to 505 (RK) each bind UDP-alpha-D-xylose. 2 cysteine pairs are disulfide-bonded: C581/C833 and C826/C839. An N-linked (GlcNAc...) asparagine glycan is attached at N683.

This sequence belongs to the glycosyltransferase 14 family. XylT subfamily. Monomer. Mg(2+) is required as a cofactor. Mn(2+) serves as cofactor. In terms of processing, contains disulfide bonds. In terms of tissue distribution, detected in brain, liver, lung, kidney, heart, spleen and testis, and at lower levels in skeletal muscle.

It localises to the golgi apparatus membrane. The protein resides in the secreted. The catalysed reaction is UDP-alpha-D-xylose + L-seryl-[protein] = 3-O-(beta-D-xylosyl)-L-seryl-[protein] + UDP + H(+). The protein operates within glycan metabolism; chondroitin sulfate biosynthesis. Its pathway is glycan metabolism; heparan sulfate biosynthesis. Catalyzes the first step in the biosynthesis of chondroitin sulfate, heparan sulfate and dermatan sulfate proteoglycans, such as DCN. Transfers D-xylose from UDP-D-xylose to specific serine residues of the core protein. This Mus musculus (Mouse) protein is Xylosyltransferase 2 (Xylt2).